Consider the following 922-residue polypeptide: uncharacterized protein (922 aa).

Disordered stretches follow at residues 459-522 (SLQD…QPKN), 539-627 (SNSA…SSLG), 649-668 (GFSS…RQPF), 692-835 (QKLD…VTSL), and 856-879 (PWRK…RPER). Residues 546-567 (KAKHSSNKPHKAASSRISKTKS) show a composition bias toward basic residues. Residues 582 to 600 (KKSEESKQSGKKVKVEEKQ) are compositionally biased toward basic and acidic residues. The span at 651–660 (SSSRTLGSSS) shows a compositional bias: low complexity. A compositionally biased stretch (basic and acidic residues) spans 692-702 (QKLDGSAEKEC). 2 stretches are compositionally biased toward polar residues: residues 755–779 (DSTN…SLTG) and 790–824 (KATQ…SSLQ). The stretch at 872–899 (TEEQRPEREAMKRKAQQERENAAKYTSL) forms a coiled coil.

This is an uncharacterized protein from Homo sapiens (Human).